Reading from the N-terminus, the 519-residue chain is MASSPAVDVSCRRREKRRQLDARRSKCRIRLGGHMEQWCLLKERLGFSLHSQLAKFLLDRYTSSGCVLCAGPEPLPPKGLQYLVLLSHAHSRECSLVPGLRGPGGQDGGLVWECSAGHTFSWGPSLSPTPSEAPKPASLPHTTRRSWCSEATSGQELADLESEHDERTQEARLPRRVGPPPETFPPPGEEEGEEEEDNDEDEEEMLSDASLWTYSSSPDDSEPDAPRLLPSPVTCTPKEGETPPAPAALSSPLAVPALSASSLSSRAPPPAEVRVQPQLSRTPQAAQQTEALASTGSQAQSAPTPAWDEDTAQIGPKRIRKAAKRELMPCDFPGCGRIFSNRQYLNHHKKYQHIHQKSFSCPEPACGKSFNFKKHLKEHMKLHSDTRDYICEFCARSFRTSSNLVIHRRIHTGEKPLQCEICGFTCRQKASLNWHQRKHAETVAALRFPCEFCGKRFEKPDSVAAHRSKSHPALLLAPQESPSGPLEPCPSISAPGPLGSSEGSRPSASPQAPTLLPQQ.

The segment at 123–314 is disordered; it reads GPSLSPTPSE…PAWDEDTAQI (192 aa). Residues 145–155 show a composition bias toward polar residues; sequence RSWCSEATSGQ. At serine 162 the chain carries Phosphoserine. The span at 164–173 shows a compositional bias: basic and acidic residues; sequence HDERTQEARL. A compositionally biased stretch (pro residues) spans 177 to 187; sequence VGPPPETFPPP. The span at 188–206 shows a compositional bias: acidic residues; that stretch reads GEEEGEEEEDNDEDEEEML. Position 231 is a phosphoserine (serine 231). Residues 247–266 are compositionally biased toward low complexity; that stretch reads AALSSPLAVPALSASSLSSR. A compositionally biased stretch (polar residues) spans 277 to 303; it reads PQLSRTPQAAQQTEALASTGSQAQSAP. 5 C2H2-type zinc fingers span residues 328–353, 359–383, 389–411, 417–439, and 448–471; these read MPCDFPGCGRIFSNRQYLNHHKKYQH, FSCPEPACGKSFNFKKHLKEHMKLH, YICEFCARSFRTSSNLVIHRRIH, LQCEICGFTCRQKASLNWHQRKH, and FPCEFCGKRFEKPDSVAAHRSKSH. The segment at 469-519 is disordered; sequence KSHPALLLAPQESPSGPLEPCPSISAPGPLGSSEGSRPSASPQAPTLLPQQ. Serine 470 carries the post-translational modification Phosphoserine; by AMPK. Positions 501–519 are enriched in polar residues; it reads SEGSRPSASPQAPTLLPQQ.

This sequence belongs to the krueppel C2H2-type zinc-finger protein family. In terms of processing, phosphorylation at Ser-470 results in loss of DNA-binding activity. In terms of tissue distribution, ubiquitous. Highly expressed in brain, thymus and spleen.

Its subcellular location is the nucleus. Its function is as follows. May act as an transcriptional repressor for PCK1 gene expression, in turn may participate in the hepatic gluconeogenesis regulation through the activated AMPK signaling pathway. The chain is Zinc finger protein 692 (ZNF692) from Homo sapiens (Human).